Reading from the N-terminus, the 302-residue chain is tRNA-cytidine(32) 2-sulfurtransferase (302 aa).

Residues 44–49 (SGGKDS) carry the PP-loop motif motif. [4Fe-4S] cluster contacts are provided by Cys119, Cys122, and Cys210.

This sequence belongs to the TtcA family. Homodimer. Mg(2+) is required as a cofactor. The cofactor is [4Fe-4S] cluster.

It localises to the cytoplasm. The enzyme catalyses cytidine(32) in tRNA + S-sulfanyl-L-cysteinyl-[cysteine desulfurase] + AH2 + ATP = 2-thiocytidine(32) in tRNA + L-cysteinyl-[cysteine desulfurase] + A + AMP + diphosphate + H(+). Its pathway is tRNA modification. Its function is as follows. Catalyzes the ATP-dependent 2-thiolation of cytidine in position 32 of tRNA, to form 2-thiocytidine (s(2)C32). The sulfur atoms are provided by the cysteine/cysteine desulfurase (IscS) system. This Teredinibacter turnerae (strain ATCC 39867 / T7901) protein is tRNA-cytidine(32) 2-sulfurtransferase.